The chain runs to 237 residues: Flagellar L-ring protein (237 aa).

The signal sequence occupies residues 1-24; that stretch reads MNRPGFPRFSVLIASLCGITLLSG. A lipid anchor (N-palmitoyl cysteine) is attached at cysteine 25. Cysteine 25 carries the S-diacylglycerol cysteine lipid modification.

The protein belongs to the FlgH family. As to quaternary structure, the basal body constitutes a major portion of the flagellar organelle and consists of four rings (L,P,S, and M) mounted on a central rod.

It localises to the cell outer membrane. Its subcellular location is the bacterial flagellum basal body. Its function is as follows. Assembles around the rod to form the L-ring and probably protects the motor/basal body from shearing forces during rotation. The protein is Flagellar L-ring protein of Pseudomonas syringae pv. tomato (strain ATCC BAA-871 / DC3000).